The following is a 375-amino-acid chain: Negative elongation factor E (375 aa).

The stretch at Gly-7–Ser-36 forms a coiled coil. The segment at Leu-30–Thr-58 is disordered. Ser-51 carries the phosphoserine modification. Lys-78 is covalently cross-linked (Glycyl lysine isopeptide (Lys-Gly) (interchain with G-Cter in SUMO1); alternate). Residue Lys-78 forms a Glycyl lysine isopeptide (Lys-Gly) (interchain with G-Cter in SUMO2); alternate linkage. The interval Ala-79–Pro-262 is disordered. A Glycyl lysine isopeptide (Lys-Gly) (interchain with G-Cter in SUMO2) cross-link involves residue Lys-82. Residues Arg-90–Lys-101 are compositionally biased toward basic and acidic residues. Phosphoserine is present on residues Ser-113 and Ser-115. Glu-122 carries the polyADP-ribosyl glutamic acid modification. Residues Ser-131 and Ser-139 each carry the phosphoserine modification. Glu-151 carries the post-translational modification PolyADP-ribosyl glutamic acid. The span at Ala-155–Asp-167 shows a compositional bias: low complexity. Glu-172 is subject to PolyADP-ribosyl glutamic acid. Phosphoserine occurs at positions 179, 181, 185, and 187. 4 tandem repeats follow at residues Arg-184–Ser-185, Arg-186–Ser-187, Arg-188–Asp-189, and Arg-190–Ser-191. Positions Arg-184–Glu-247 are 32 X 2 AA approximate tandem repeats of R-[DSE]. The span at Arg-186–Arg-260 shows a compositional bias: basic and acidic residues. Position 191 is a phosphoserine (Ser-191). The stretch at His-192–Asp-193 is one 5; approximate repeat. Repeat copies occupy residues Arg-194 to Ser-195, Arg-196 to Asp-197, Arg-198 to Asp-199, and Arg-200 to Asp-201. The 10; approximate repeat unit spans residues Lys-202–Glu-203. 7 consecutive repeat copies span residues Arg-204–Asp-205, Arg-206–Asp-207, Arg-208–Asp-209, Arg-210–Asp-211, Arg-212–Asp-213, Arg-214–Asp-215, and Arg-216–Asp-217. Residues Lys-218 to Asp-219 form an 18; approximate repeat. Residues Lys-220 to Asp-221 form a 19; approximate repeat. Tandem repeats lie at residues Arg-222–Asp-223, Arg-224–Asp-225, Arg-226–Asp-227, and Arg-228–Asp-229. One copy of the 24; approximate repeat lies at Lys-230 to Glu-231. 8 repeat units span residues Arg-232–Asp-233, Arg-234–Asp-235, Arg-236–Asp-237, Arg-238–Asp-239, Arg-240–Asp-241, Arg-242–Glu-243, Arg-244–Asp-245, and Arg-246–Glu-247. A phosphoserine mark is found at Ser-253 and Ser-255. Residues Asn-266 to Lys-336 enclose the RRM domain. 2 positions are modified to phosphothreonine: Thr-276 and Thr-278. Ser-285 and Ser-357 each carry phosphoserine.

The protein belongs to the RRM NELF-E family. In terms of assembly, the NELF complex is composed of NELFA, NELFB, NELFCD and NELFE. Interacts with NELFB. Post-translationally, phosphorylated by the P-TEFb complex at sites next to its RNA recognition motif, promoting its release from chromatin. In terms of processing, sumoylated. Poly-ADP-ribosylated by PARP1, thereby preventing RNA-binding and relieving transcription pausing.

Its subcellular location is the nucleus. The protein resides in the chromosome. Essential component of the NELF complex, a complex that negatively regulates the elongation of transcription by RNA polymerase II. The NELF complex, which acts via an association with the DSIF complex and causes transcriptional pausing, is counteracted by the P-TEFb kinase complex. Provides the strongest RNA binding activity of the NELF complex and may initially recruit the NELF complex to RNA. This is Negative elongation factor E (Nelfe) from Mus musculus (Mouse).